The chain runs to 1017 residues: Anaphase-promoting complex subunit 5 (1017 aa).

5 TPR repeats span residues 30 to 63 (KQSL…EKEL), 182 to 214 (DMSM…SPLD), 252 to 286 (VKRV…VNGQ), 337 to 370 (PYAV…AQER), and 508 to 541 (NNNN…WNDI). Positions 451–525 (INSNNYNSNN…NNNSSNSNNN (75 aa)) are enriched in low complexity. 2 disordered regions span residues 451 to 527 (INSN…NNGG) and 617 to 636 (NNNN…QQQN). 5 TPR repeats span residues 642–675 (LLSF…YKTQ), 756–790 (VICY…SRDF), 838–871 (ADSN…VLSD), 876–908 (SQLY…FLQL), and 931–964 (KEIY…LVPS).

This sequence belongs to the APC5 family. As to quaternary structure, the APC/C is composed of at least 13 subunits that stay tightly associated throughout the cell cycle: anapc1, anapc2, anapc3, anapc4, anapc5, anapc6, anapc7, anapc8, anapc10, anapc11, cdc20, cdc26 and cdh1.

It is found in the nucleus. It participates in protein modification; protein ubiquitination. Functionally, component of the anaphase promoting complex/cyclosome (APC/C), a cell cycle-regulated E3 ubiquitin-protein ligase complex that controls progression through mitosis and the G1 phase of the cell cycle. In Dictyostelium discoideum (Social amoeba), this protein is Anaphase-promoting complex subunit 5 (anapc5).